The sequence spans 379 residues: UDP-4-amino-4-deoxy-L-arabinose--oxoglutarate aminotransferase (379 aa).

Position 182 is an N6-(pyridoxal phosphate)lysine (K182).

It belongs to the DegT/DnrJ/EryC1 family. ArnB subfamily. In terms of assembly, homodimer. Requires pyridoxal 5'-phosphate as cofactor.

It carries out the reaction UDP-4-amino-4-deoxy-beta-L-arabinose + 2-oxoglutarate = UDP-beta-L-threo-pentopyranos-4-ulose + L-glutamate. It participates in nucleotide-sugar biosynthesis; UDP-4-deoxy-4-formamido-beta-L-arabinose biosynthesis; UDP-4-deoxy-4-formamido-beta-L-arabinose from UDP-alpha-D-glucuronate: step 2/3. The protein operates within bacterial outer membrane biogenesis; lipopolysaccharide biosynthesis. Functionally, catalyzes the conversion of UDP-4-keto-arabinose (UDP-Ara4O) to UDP-4-amino-4-deoxy-L-arabinose (UDP-L-Ara4N). The modified arabinose is attached to lipid A and is required for resistance to polymyxin and cationic antimicrobial peptides. This chain is UDP-4-amino-4-deoxy-L-arabinose--oxoglutarate aminotransferase, found in Escherichia coli O81 (strain ED1a).